The primary structure comprises 200 residues: Peroxiredoxin (200 aa).

The Thioredoxin domain maps to 6–165; sequence AQIGKPAPEF…TLRLVQAFQH (160 aa). The active-site Cysteine sulfenic acid (-SOH) intermediate is the C52.

Belongs to the peroxiredoxin family. AhpC/Prx1 subfamily. Homodimer; disulfide-linked, upon oxidation.

The enzyme catalyses a hydroperoxide + [thioredoxin]-dithiol = an alcohol + [thioredoxin]-disulfide + H2O. Its function is as follows. Thiol-specific peroxidase that catalyzes the reduction of hydrogen peroxide and organic hydroperoxides to water and alcohols, respectively. Plays a role in cell protection against oxidative stress by detoxifying peroxides and as sensor of hydrogen peroxide-mediated signaling events. This is Peroxiredoxin from Cynops pyrrhogaster (Japanese fire-bellied newt).